The following is a 451-amino-acid chain: Trigger factor (451 aa).

The PPIase FKBP-type domain occupies Asp-165–Leu-250.

Belongs to the FKBP-type PPIase family. Tig subfamily.

It localises to the cytoplasm. It carries out the reaction [protein]-peptidylproline (omega=180) = [protein]-peptidylproline (omega=0). Involved in protein export. Acts as a chaperone by maintaining the newly synthesized protein in an open conformation. Functions as a peptidyl-prolyl cis-trans isomerase. The protein is Trigger factor of Helicobacter acinonychis (strain Sheeba).